Consider the following 521-residue polypeptide: MSGIALRRRREQAQRRRSIAGVLAAVGGGTALGLAAPPTGWGVLVWVALVPLLVYLRAEHRPRAFWLGTLAGMVYYAILLRWLLGFHPLTWLGIEWWPSLAIALGAWLFVSASQAWVIGLWASLVVRTRLSGLRRVLFAVGLWVGLHWLWGQGETAFPWGTLAQSLAGDLWAVQTVALGGAQLLVGLAVAVNALVAESWSTRRVGYAGLAALLAASVYLYGWWQLAQPLPAGEPLRMGVIQGNIAQARKWTPDGRRETVETYVRGYEELAAAGAQLVLTPETAFPFIWSRPTNPAAPLVPEIQSRRVPVLLSAFERRTDGQVATTLFALDGDARTISTFNKIHLVPFGEQIPLKALIGPLVRKLSPVQQEVFAGSLGQRLQTPVGLVAAGICFDSAFADGFRAQVAAGARLLVQSTNDAWYGPAMAPQHHALDALRAVETGRYLVRASNNGTSAVVDPLGRTTRITGWNVYAAFVEPVRLLEGMTLYALWGDWFVPLSAALALLGLIAGRSPAGRRGRRNF.

Helical transmembrane passes span 34-54 (LAAPPTGWGVLVWVALVPLLV), 64-84 (AFWLGTLAGMVYYAILLRWLL), 100-120 (LAIALGAWLFVSASQAWVIGL), 137-157 (LFAVGLWVGLHWLWGQGETAF), 176-196 (VALGGAQLLVGLAVAVNALVA), and 206-226 (YAGLAALLAASVYLYGWWQLA). Residues 240–480 (IQGNIAQARK…YAAFVEPVRL (241 aa)) form the CN hydrolase domain. The active-site Proton acceptor is E281. The active site involves K341. The active-site Nucleophile is the C392. Residues 488-508 (ALWGDWFVPLSAALALLGLIA) form a helical membrane-spanning segment.

This sequence belongs to the CN hydrolase family. Apolipoprotein N-acyltransferase subfamily.

It localises to the cell inner membrane. The catalysed reaction is N-terminal S-1,2-diacyl-sn-glyceryl-L-cysteinyl-[lipoprotein] + a glycerophospholipid = N-acyl-S-1,2-diacyl-sn-glyceryl-L-cysteinyl-[lipoprotein] + a 2-acyl-sn-glycero-3-phospholipid + H(+). Its pathway is protein modification; lipoprotein biosynthesis (N-acyl transfer). Its function is as follows. Catalyzes the phospholipid dependent N-acylation of the N-terminal cysteine of apolipoprotein, the last step in lipoprotein maturation. The chain is Apolipoprotein N-acyltransferase from Gloeobacter violaceus (strain ATCC 29082 / PCC 7421).